The sequence spans 544 residues: O-phosphoserine--tRNA(Cys) ligase (544 aa).

Substrate is bound by residues H194–T196, S239–S241, Y281–Y282, and N335.

Belongs to the class-II aminoacyl-tRNA synthetase family. O-phosphoseryl-tRNA(Cys) synthetase subfamily. Homotetramer. Interacts with SepCysS.

It carries out the reaction tRNA(Cys) + O-phospho-L-serine + ATP = O-phospho-L-seryl-tRNA(Cys) + AMP + diphosphate. In terms of biological role, catalyzes the attachment of O-phosphoserine (Sep) to tRNA(Cys). The chain is O-phosphoserine--tRNA(Cys) ligase from Methanopyrus kandleri (strain AV19 / DSM 6324 / JCM 9639 / NBRC 100938).